Here is a 357-residue protein sequence, read N- to C-terminus: Heat-inducible transcription repressor HrcA (357 aa).

It belongs to the HrcA family.

Functionally, negative regulator of class I heat shock genes (grpE-dnaK-dnaJ and groELS operons). Prevents heat-shock induction of these operons. In Chlorobium luteolum (strain DSM 273 / BCRC 81028 / 2530) (Pelodictyon luteolum), this protein is Heat-inducible transcription repressor HrcA.